Reading from the N-terminus, the 283-residue chain is UPF0276 protein Anae109_1558 (283 aa).

This sequence belongs to the UPF0276 family.

This is UPF0276 protein Anae109_1558 from Anaeromyxobacter sp. (strain Fw109-5).